Reading from the N-terminus, the 357-residue chain is Histidinol-phosphate aminotransferase (357 aa).

Lys212 carries the N6-(pyridoxal phosphate)lysine modification.

It belongs to the class-II pyridoxal-phosphate-dependent aminotransferase family. Histidinol-phosphate aminotransferase subfamily. Homodimer. Pyridoxal 5'-phosphate serves as cofactor.

It carries out the reaction L-histidinol phosphate + 2-oxoglutarate = 3-(imidazol-4-yl)-2-oxopropyl phosphate + L-glutamate. It participates in amino-acid biosynthesis; L-histidine biosynthesis; L-histidine from 5-phospho-alpha-D-ribose 1-diphosphate: step 7/9. The polypeptide is Histidinol-phosphate aminotransferase (Pectobacterium carotovorum subsp. carotovorum (strain PC1)).